The following is a 490-amino-acid chain: Scarecrow-like transcription factor PAT1 (490 aa).

In terms of domain architecture, GRAS spans 110–490 (TLEAISRRDL…RDLVASCAWK (381 aa)). The tract at residues 117-178 (RDLRADLVSC…AQLASSGSSI (62 aa)) is leucine repeat I (LRI). Positions 197 to 262 (MHILYEVCPY…GGPPRIRITG (66 aa)) are VHIID. The short motif at 228 to 232 (VHIID) is the VHIID element. A leucine repeat II (LRII) region spans residues 278–310 (IVGNRLAKLAKQFNVPFEFNSVSVSVSEVKPKN). Residues 319-413 (LAVNFAFVLH…QHCLARDVVN (95 aa)) form a PFYRE region. The SAW stretch occupies residues 416-490 (ACEGADRVER…RDLVASCAWK (75 aa)).

This sequence belongs to the GRAS family.

It localises to the cytoplasm. Its function is as follows. Probable transcription factor involved in phytochrome A (phyA) signal transduction. The protein is Scarecrow-like transcription factor PAT1 (PAT1) of Arabidopsis thaliana (Mouse-ear cress).